The sequence spans 228 residues: Protein boule (228 aa).

In terms of domain architecture, RRM spans 33 to 110 (NRIFVGGISG…RKLNIAPAIK (78 aa)). In terms of domain architecture, DAZ spans 151-178 (PAAGVPAIYPPSAMQYQPFYQYYSVPMN). Positions 193-214 (PLLHSPTSNPHSPHSQSHPQSP) are enriched in low complexity. Residues 193–228 (PLLHSPTSNPHSPHSQSHPQSPCWSIEDLRDTLPRV) form a disordered region. Basic and acidic residues predominate over residues 219-228 (EDLRDTLPRV).

The protein belongs to the RRM DAZ family. Interacts with the translational regulator orb2. Testis specific.

The protein localises to the nucleus. It is found in the cytoplasm. In terms of biological role, RNA-binding protein that plays a central role in spermatogenesis. Required for meiotic entry and germline differentiation, at the transition between G2 and M phases of meiosis I. Acts by regulating translation of specific mRNAs, possibly by binding to their 3'-UTR. Essential for translation of twine (twe) mRNA. Required for the expression of various genes such as CG6784, CG17210, CG15841 scpr-B, scpr-C, and rho-6. This Drosophila melanogaster (Fruit fly) protein is Protein boule (bol).